We begin with the raw amino-acid sequence, 463 residues long: Adenosylhomocysteinase (463 aa).

Substrate-binding residues include T54, D128, and E189. Position 190-192 (190-192) interacts with NAD(+); the sequence is TTT. Substrate is bound by residues K219 and D223. NAD(+) contacts are provided by residues N224, 253–258, E276, N311, 332–334, and N377; these read GYGDVG and IGH.

Belongs to the adenosylhomocysteinase family. Homotetramer. The cofactor is NAD(+).

Its subcellular location is the cytoplasm. It carries out the reaction S-adenosyl-L-homocysteine + H2O = L-homocysteine + adenosine. It participates in amino-acid biosynthesis; L-homocysteine biosynthesis; L-homocysteine from S-adenosyl-L-homocysteine: step 1/1. Functionally, may play a key role in the regulation of the intracellular concentration of adenosylhomocysteine. The polypeptide is Adenosylhomocysteinase (Rhodobacter capsulatus (strain ATCC BAA-309 / NBRC 16581 / SB1003)).